The sequence spans 77 residues: DinI-like protein in retron Ec67 (77 aa).

It belongs to the DinI family.

In Escherichia coli, this protein is DinI-like protein in retron Ec67.